The chain runs to 416 residues: Gamma-glutamyl phosphate reductase (416 aa).

This sequence belongs to the gamma-glutamyl phosphate reductase family.

It is found in the cytoplasm. The enzyme catalyses L-glutamate 5-semialdehyde + phosphate + NADP(+) = L-glutamyl 5-phosphate + NADPH + H(+). It functions in the pathway amino-acid biosynthesis; L-proline biosynthesis; L-glutamate 5-semialdehyde from L-glutamate: step 2/2. In terms of biological role, catalyzes the NADPH-dependent reduction of L-glutamate 5-phosphate into L-glutamate 5-semialdehyde and phosphate. The product spontaneously undergoes cyclization to form 1-pyrroline-5-carboxylate. The protein is Gamma-glutamyl phosphate reductase of Salmonella arizonae (strain ATCC BAA-731 / CDC346-86 / RSK2980).